The following is a 486-amino-acid chain: UDP-N-acetylmuramate--L-alanine ligase (486 aa).

Residue 123–129 participates in ATP binding; the sequence is GTHGKTT.

Belongs to the MurCDEF family.

The protein localises to the cytoplasm. The enzyme catalyses UDP-N-acetyl-alpha-D-muramate + L-alanine + ATP = UDP-N-acetyl-alpha-D-muramoyl-L-alanine + ADP + phosphate + H(+). It participates in cell wall biogenesis; peptidoglycan biosynthesis. Functionally, cell wall formation. The polypeptide is UDP-N-acetylmuramate--L-alanine ligase (Pseudomonas syringae pv. syringae (strain B728a)).